A 165-amino-acid polypeptide reads, in one-letter code: Nucleotide-binding protein Suden_0039 (165 aa).

Belongs to the YajQ family.

Its function is as follows. Nucleotide-binding protein. The protein is Nucleotide-binding protein Suden_0039 of Sulfurimonas denitrificans (strain ATCC 33889 / DSM 1251) (Thiomicrospira denitrificans (strain ATCC 33889 / DSM 1251)).